Reading from the N-terminus, the 309-residue chain is NADH-cytochrome b5 reductase 1 (309 aa).

A helical membrane pass occupies residues 30–50; the sequence is FVPYAVALTAILAGLKLFTGG. The region spanning 60-165 is the FAD-binding FR-type domain; sequence TEFQEFVLKE…RGPKGAMVYT (106 aa). Residues 145 to 160 and 171 to 208 each bind FAD; these read TTLK…GPKG and HIGM…KLDL.

It belongs to the flavoprotein pyridine nucleotide cytochrome reductase family. As to quaternary structure, monomer. Component of the 2-(3-amino-3-carboxypropyl)histidine synthase complex composed of dph1, dph2, dph3 and a NADH-dependent reductase, predominantly cbr1. The cofactor is FAD.

It localises to the mitochondrion outer membrane. The enzyme catalyses 2 Fe(III)-[cytochrome b5] + NADH = 2 Fe(II)-[cytochrome b5] + NAD(+) + H(+). It catalyses the reaction 2 Fe(3+)-[Dph3] + NADH = 2 Fe(2+)-[Dph3] + NAD(+) + H(+). It functions in the pathway protein modification; peptidyl-diphthamide biosynthesis. Its function is as follows. NADH-dependent reductase for dph3 and cytochrome b5. Required for the first step of diphthamide biosynthesis, a post-translational modification of histidine which occurs in elongation factor 2. Dph1 and dph2 transfer a 3-amino-3-carboxypropyl (ACP) group from S-adenosyl-L-methionine (SAM) to a histidine residue, the reaction is assisted by a reduction system comprising dph3 and a NADH-dependent reductase, predominantly cbr1. By reducing dph3, also involved in the formation of the tRNA wobble base modification mcm5s 2U (5-methoxycarbonylmethyl-2-thiouridine), mediated by the elongator complex. The cytochrome b5/NADH cytochrome b5 reductase electron transfer system supports the catalytic activity of several sterol biosynthetic enzymes. This chain is NADH-cytochrome b5 reductase 1 (cbr1), found in Neosartorya fischeri (strain ATCC 1020 / DSM 3700 / CBS 544.65 / FGSC A1164 / JCM 1740 / NRRL 181 / WB 181) (Aspergillus fischerianus).